The primary structure comprises 227 residues: Pyridoxine/pyridoxamine 5'-phosphate oxidase (227 aa).

Substrate contacts are provided by residues 23 to 26 (RREY) and Lys81. Residues 76–81 (RIVLLK), 91–92 (YT), Arg97, Lys98, and Gln120 each bind FMN. The substrate site is built by Tyr138, Arg142, and Ser146. FMN is bound by residues 155 to 156 (QS) and Trp200. Substrate is bound at residue 206-208 (RLH). Arg210 is a binding site for FMN.

This sequence belongs to the pyridoxamine 5'-phosphate oxidase family. Homodimer. FMN is required as a cofactor.

The enzyme catalyses pyridoxamine 5'-phosphate + O2 + H2O = pyridoxal 5'-phosphate + H2O2 + NH4(+). The catalysed reaction is pyridoxine 5'-phosphate + O2 = pyridoxal 5'-phosphate + H2O2. It functions in the pathway cofactor metabolism; pyridoxal 5'-phosphate salvage; pyridoxal 5'-phosphate from pyridoxamine 5'-phosphate: step 1/1. It participates in cofactor metabolism; pyridoxal 5'-phosphate salvage; pyridoxal 5'-phosphate from pyridoxine 5'-phosphate: step 1/1. In terms of biological role, catalyzes the oxidation of either pyridoxine 5'-phosphate (PNP) or pyridoxamine 5'-phosphate (PMP) into pyridoxal 5'-phosphate (PLP). The protein is Pyridoxine/pyridoxamine 5'-phosphate oxidase of Pectobacterium atrosepticum (strain SCRI 1043 / ATCC BAA-672) (Erwinia carotovora subsp. atroseptica).